Consider the following 394-residue polypeptide: Elongation factor Tu (394 aa).

The 195-residue stretch at 10–204 folds into the tr-type G domain; sequence KPHVNVGTIG…ALDTYIPEPE (195 aa). The segment at 19-26 is G1; the sequence is GHVDHGKT. 19 to 26 contacts GTP; that stretch reads GHVDHGKT. Residue threonine 26 participates in Mg(2+) binding. The tract at residues 60-64 is G2; the sequence is GITIN. A G3 region spans residues 81–84; sequence DCPG. GTP-binding positions include 81 to 85 and 136 to 139; these read DCPGH and NKCD. The segment at 136–139 is G4; it reads NKCD. Residues 174–176 form a G5 region; the sequence is SAL.

The protein belongs to the TRAFAC class translation factor GTPase superfamily. Classic translation factor GTPase family. EF-Tu/EF-1A subfamily. As to quaternary structure, monomer.

The protein localises to the cytoplasm. The enzyme catalyses GTP + H2O = GDP + phosphate + H(+). Functionally, GTP hydrolase that promotes the GTP-dependent binding of aminoacyl-tRNA to the A-site of ribosomes during protein biosynthesis. This chain is Elongation factor Tu, found in Shewanella pealeana (strain ATCC 700345 / ANG-SQ1).